Reading from the N-terminus, the 342-residue chain is (Lyso)-N-acylphosphatidylethanolamine lipase (342 aa).

The 132-residue stretch at 70–201 folds into the AB hydrolase-1 domain; the sequence is PLVMVHGFGG…KAVASVLGRS (132 aa).

It belongs to the peptidase S33 family. ABHD4/ABHD5 subfamily.

It carries out the reaction N-hexadecanoyl-1,2-di-(9Z-octadecenoyl)-sn-glycero-3-phosphoethanolamine + H2O = N-hexadecanoyl-1-(9Z-octadecenoyl)-sn-glycero-3-phosphoethanolamine + (9Z)-octadecenoate + H(+). The catalysed reaction is an N-acyl-1,2-diacyl-sn-glycero-3-phosphoethanolamine + H2O = N,1-diacyl-sn-glycero-3-phosphoethanolamine + a fatty acid + H(+). The enzyme catalyses N-hexadecanoyl-1-(9Z-octadecenoyl)-sn-glycero-3-phosphoethanolamine + H2O = N-hexadecanoyl-sn-glycero-3-phosphoethanolamine + (9Z)-octadecenoate + H(+). It catalyses the reaction N-octadecanoyl-1-(9Z-octadecenoyl)-sn-glycero-3-phosphoethanolamine + H2O = N-octadecanoyl-sn-glycero-3-phospho-ethanolamine + (9Z)-octadecenoate + H(+). It carries out the reaction N-eicosanoyl-1-(9Z-octadecenoyl)-sn-glycero-3-phosphoethanolamine + H2O = N-eicosanoyl-sn-glycero-3-phosphoethanolamine + (9Z)-octadecenoate + H(+). The catalysed reaction is N,1-di-(9Z-octadecenoyl)-sn-glycero-3-phosphoethanolamine + H2O = N-(9Z-octadecenoyl)-sn-glycero-3-phosphoethanolamine + (9Z)-octadecenoate + H(+). The enzyme catalyses N-(5Z,8Z,11Z,14Z-eicosatetraenoyl)-1-(9Z-octadecenoyl)-sn-glycero-3-phosphoethanolamine + H2O = N-(5Z,8Z,11Z,14Z-eicosatetraenoyl)-sn-glycero-3-phosphoethanolamine + (9Z)-octadecenoate + H(+). It catalyses the reaction 1-octadecanoyl-2-(9Z-octadecenoyl)-sn-glycero-3-phospho-(N-hexadecanoyl)-serine + H2O = 1-octadecanoyl-2-hydroxy-sn-glycero-3-phospho-(N-hexadecanoyl)-serine + (9Z)-octadecenoate + H(+). It carries out the reaction 1-O-(1Z-octadecenoyl)-2-(9Z-octadecenoyl)-sn-glycero-3-phospho-N-hexadecanoyl-ethanolamine + H2O = 1-O-(1Z-octadecenyl)-sn-glycero-3-phospho-N-hexadecanoyl-ethanolamine + (9Z)-octadecenoate + H(+). The catalysed reaction is N,1-diacyl-sn-glycero-3-phosphoethanolamine + H2O = N-acyl-sn-glycero-3-phosphoethanolamine + a fatty acid + H(+). Its function is as follows. Lysophospholipase selective for N-acyl phosphatidylethanolamine (NAPE). Contributes to the biosynthesis of N-acyl ethanolamines, including the endocannabinoid anandamide by hydrolyzing the sn-1 and sn-2 acyl chains from N-acyl phosphatidylethanolamine (NAPE) generating glycerophospho-N-acyl ethanolamine (GP-NAE), an intermediate for N-acyl ethanolamine biosynthesis. Hydrolyzes substrates bearing saturated, monounsaturated, polyunsaturated N-acyl chains. Shows no significant activity towards other lysophospholipids, including lysophosphatidylcholine, lysophosphatidylethanolamine and lysophosphatidylserine. This is (Lyso)-N-acylphosphatidylethanolamine lipase from Homo sapiens (Human).